Here is a 225-residue protein sequence, read N- to C-terminus: PKHD-type hydroxylase YbiX (225 aa).

Residues 78–177 form the Fe2OG dioxygenase domain; it reads TLSTPLFNRY…RVASFMWIQS (100 aa). Positions 96, 98, and 158 each coordinate Fe cation. Arg168 contacts 2-oxoglutarate.

Fe(2+) is required as a cofactor. It depends on L-ascorbate as a cofactor.

The sequence is that of PKHD-type hydroxylase YbiX from Shigella flexneri serotype 5b (strain 8401).